Here is a 229-residue protein sequence, read N- to C-terminus: GTP cyclohydrolase 1 (229 aa).

Residues 1 to 26 form a disordered region; it reads MDAKIKPLRGGKPADARPEFQPAELD. Zn(2+)-binding residues include Cys-118, His-121, and Cys-189.

The protein belongs to the GTP cyclohydrolase I family. As to quaternary structure, toroid-shaped homodecamer, composed of two pentamers of five dimers.

The catalysed reaction is GTP + H2O = 7,8-dihydroneopterin 3'-triphosphate + formate + H(+). The protein operates within cofactor biosynthesis; 7,8-dihydroneopterin triphosphate biosynthesis; 7,8-dihydroneopterin triphosphate from GTP: step 1/1. The polypeptide is GTP cyclohydrolase 1 (Rhodopseudomonas palustris (strain BisB5)).